The sequence spans 288 residues: Pyruvate synthase subunit PorB (288 aa).

Residues Cys-16, Cys-19, and Cys-44 each contribute to the [4Fe-4S] cluster site. Over residues 137-148 (STPYGASTTTSP) the composition is skewed to polar residues. The interval 137–159 (STPYGASTTTSPHGKESFGEDRP) is disordered. Positions 149-159 (HGKESFGEDRP) are enriched in basic and acidic residues. Position 208 (Cys-208) interacts with [4Fe-4S] cluster.

As to quaternary structure, heterotetramer of one alpha, one beta, one delta and one gamma chain. [4Fe-4S] cluster is required as a cofactor.

It catalyses the reaction 2 oxidized [2Fe-2S]-[ferredoxin] + pyruvate + CoA = 2 reduced [2Fe-2S]-[ferredoxin] + acetyl-CoA + CO2 + H(+). This chain is Pyruvate synthase subunit PorB (porB), found in Methanothermobacter thermautotrophicus (strain ATCC 29096 / DSM 1053 / JCM 10044 / NBRC 100330 / Delta H) (Methanobacterium thermoautotrophicum).